Here is a 391-residue protein sequence, read N- to C-terminus: FLUCTUATING-LIGHT-ACCLIMATION protein 1, chloroplastic (391 aa).

A chloroplast-targeting transit peptide spans 1-48 (MASSSTFLELTPFQWNQPLPYTQRPHHRTVLLYSKPQRRSNSIRLQIS). The chain crosses the membrane as a helical span at residues 87–107 (AIAAVLLGLLLFYDPNSALAA). Positions 116 to 138 (SFSSRSRSSSSSSSQSYSVPRTS) are enriched in low complexity. The interval 116–140 (SFSSRSRSSSSSSSQSYSVPRTSNP) is disordered. The next 2 helical transmembrane spans lie at 168-188 (FGFGGFSSFSLILVGFAAFVL) and 321-341 (YIVVTILMAAEGIHKLPPING).

This sequence belongs to the FLAP family.

The protein resides in the plastid. It localises to the chloroplast thylakoid membrane. Its subcellular location is the chloroplast membrane. It is found in the chloroplast envelope. In terms of biological role, monitors proton H(+) homeostasis in chloroplasts to manipulate luminal acidification levels appropriately to balance photoprotection and photochemical processes. Required during acclimation response to fluctuating light (e.g. photosynthetic activity optimization) by controlling non-photochemical quenching (NPQ); acts independently from DLDG1. In Arabidopsis thaliana (Mouse-ear cress), this protein is FLUCTUATING-LIGHT-ACCLIMATION protein 1, chloroplastic.